The primary structure comprises 435 residues: Cytochrome c biogenesis protein Ccs1 (435 aa).

3 consecutive transmembrane segments (helical) span residues 17 to 37 (LSLSISLLLLIASISIIGTII), 77 to 97 (NPCFVLVLVLFFCSLLACTFS), and 163 to 183 (IAPIVVHFSIILTFIGSLISL).

The protein belongs to the Ccs1/CcsB family. May interact with CcsA.

Its subcellular location is the plastid. The protein resides in the chloroplast thylakoid membrane. Required during biogenesis of c-type cytochromes (cytochrome c6 and cytochrome f) at the step of heme attachment. This chain is Cytochrome c biogenesis protein Ccs1, found in Gracilaria tenuistipitata var. liui (Red alga).